We begin with the raw amino-acid sequence, 268 residues long: Putative F-box protein At3g23420 (268 aa).

The F-box domain maps to 5–51; it reads PRDLSDLPRNMAEEVLSRVPMTSLRRLRFTCKKWNTLSRCRSFAKKH.

This chain is Putative F-box protein At3g23420, found in Arabidopsis thaliana (Mouse-ear cress).